A 208-amino-acid chain; its full sequence is Protein DEHYDRATION-INDUCED 19 homolog 6 (208 aa).

Residues Val151–Glu190 are disordered. Composition is skewed to basic and acidic residues over residues Ser153–Gly163 and Asp170–Glu190.

This sequence belongs to the Di19 family.

In Oryza sativa subsp. japonica (Rice), this protein is Protein DEHYDRATION-INDUCED 19 homolog 6 (DI19-6).